The chain runs to 361 residues: MLYNLLLPHVHNSHIANLFHYITFRSGLAIIITLSLSFITGPILIKFLRSLQKNGQPIRSDGPESHQTKVGTPTMGGIMIILSSCLSTLLLADLTNKYIWITLFGFISFGIIGFMDDYAKVTKNNHYGVRGKSKLLLQGIISFIICVLLEYLDKSPSHLLNVPFFKNLSLDLGYFYIVFAMFVIVGSSNAVNLTDGLDGLATVPIAFTAGSFALISYLVGNLIYSNYLQLTYIPNTGELTVLCAGLVGSCLGFLWFNAQPAEVFMGDTGSLSLGGVLGIISVITKHEIVLAIVGGLFVIETTSVILQVYYFKATKGKRIFKMAPLHHHFEKHGWAESKVVIRFWIISVIFALIGLSSLKLR.

10 helical membrane passes run 28-48 (LAII…IKFL), 74-94 (TMGG…LADL), 99-119 (IWIT…DDYA), 133-153 (SKLL…EYLD), 168-188 (LSLD…VGSS), 203-223 (VPIA…GNLI), 236-256 (TGEL…FLWF), 263-283 (VFMG…ISVI), 288-308 (IVLA…ILQV), and 338-358 (KVVI…LSSL).

Belongs to the glycosyltransferase 4 family. MraY subfamily. Mg(2+) serves as cofactor.

It is found in the cell membrane. It carries out the reaction UDP-N-acetyl-alpha-D-muramoyl-L-alanyl-gamma-D-glutamyl-meso-2,6-diaminopimeloyl-D-alanyl-D-alanine + di-trans,octa-cis-undecaprenyl phosphate = di-trans,octa-cis-undecaprenyl diphospho-N-acetyl-alpha-D-muramoyl-L-alanyl-D-glutamyl-meso-2,6-diaminopimeloyl-D-alanyl-D-alanine + UMP. The protein operates within cell wall biogenesis; peptidoglycan biosynthesis. In terms of biological role, catalyzes the initial step of the lipid cycle reactions in the biosynthesis of the cell wall peptidoglycan: transfers peptidoglycan precursor phospho-MurNAc-pentapeptide from UDP-MurNAc-pentapeptide onto the lipid carrier undecaprenyl phosphate, yielding undecaprenyl-pyrophosphoryl-MurNAc-pentapeptide, known as lipid I. This chain is Phospho-N-acetylmuramoyl-pentapeptide-transferase, found in Rickettsia montanensis.